Reading from the N-terminus, the 377-residue chain is Flagellar P-ring protein (377 aa).

The signal sequence occupies residues 1–30; the sequence is MLARFLSSLLKASVTALAVVVAFGFAANFA.

Belongs to the FlgI family. The basal body constitutes a major portion of the flagellar organelle and consists of four rings (L,P,S, and M) mounted on a central rod.

It localises to the periplasm. Its subcellular location is the bacterial flagellum basal body. In terms of biological role, assembles around the rod to form the L-ring and probably protects the motor/basal body from shearing forces during rotation. The sequence is that of Flagellar P-ring protein from Cupriavidus pinatubonensis (strain JMP 134 / LMG 1197) (Cupriavidus necator (strain JMP 134)).